A 319-amino-acid polypeptide reads, in one-letter code: 3-oxoacyl-[acyl-carrier-protein] reductase, chloroplastic (319 aa).

The transit peptide at 1 to 57 (MAAAVAAPRLISLKAVAKLGFREISQIRQLAPLHSAIPHFGMLRCRSRQPFSTSVVK) directs the protein to the chloroplast. The residue at position 58 (A58) is an N-acetylalanine. 81 to 105 (ITGASRGIGKAIALALGKAGCKVLV) lines the NADP(+) pocket. S213 contacts substrate. The active-site Proton acceptor is Y226.

Belongs to the short-chain dehydrogenases/reductases (SDR) family. In terms of assembly, homotetramer.

The protein resides in the plastid. It is found in the chloroplast. It carries out the reaction a (3R)-hydroxyacyl-[ACP] + NADP(+) = a 3-oxoacyl-[ACP] + NADPH + H(+). The protein operates within lipid metabolism; fatty acid biosynthesis. This chain is 3-oxoacyl-[acyl-carrier-protein] reductase, chloroplastic, found in Arabidopsis thaliana (Mouse-ear cress).